The primary structure comprises 53 residues: Light-harvesting protein B-800/850 alpha chain (53 aa).

The Cytoplasmic segment spans residues 1–14 (MNQGKIWTVVNPSV). Residues 15–35 (GLPLLLGSVTVIAILVHAAVL) form a helical membrane-spanning segment. His-31 serves as a coordination point for a bacteriochlorophyll. The Periplasmic segment spans residues 36 to 53 (SHTTWFPAYWQGGLKKAA).

It belongs to the antenna complex alpha subunit family. In terms of assembly, the core complex is formed by different alpha and beta chains, binding bacteriochlorophyll molecules, and arranged most probably in tetrameric structures disposed around the reaction center. The non-pigmented gamma chains may constitute additional components.

The protein resides in the cell inner membrane. In terms of biological role, antenna complexes are light-harvesting systems, which transfer the excitation energy to the reaction centers. The sequence is that of Light-harvesting protein B-800/850 alpha chain from Rhodoblastus acidophilus (Rhodopseudomonas acidophila).